Here is a 62-residue protein sequence, read N- to C-terminus: MARYRRSRTRSRSPRSRRRRRRSGRRRSPRRRRRYGSARRSRRSVGGRRRRYGSRRRRRRRY.

The interval 1–62 (MARYRRSRTR…GSRRRRRRRY (62 aa)) is disordered. T9 is modified (phosphothreonine).

Belongs to the protamine P1 family. In terms of tissue distribution, testis.

The protein resides in the nucleus. Its subcellular location is the chromosome. In terms of biological role, protamines substitute for histones in the chromatin of sperm during the haploid phase of spermatogenesis. They compact sperm DNA into a highly condensed, stable and inactive complex. The polypeptide is Sperm histone (Gallus gallus (Chicken)).